An 86-amino-acid polypeptide reads, in one-letter code: Anti-adapter protein IraP (86 aa).

Residues 1–36 (MKNLIAELLLKLAQKEEESKELCAQVEALEIIVTAM) adopt a coiled-coil conformation.

This sequence belongs to the IraP family. In terms of assembly, interacts with RssB.

It is found in the cytoplasm. Its function is as follows. Inhibits RpoS proteolysis by regulating RssB activity, thereby increasing the stability of the sigma stress factor RpoS especially during phosphate starvation, but also in stationary phase and during nitrogen starvation. Its effect on RpoS stability is due to its interaction with RssB, which probably blocks the interaction of RssB with RpoS, and the consequent delivery of the RssB-RpoS complex to the ClpXP protein degradation pathway. This chain is Anti-adapter protein IraP, found in Shigella boydii serotype 18 (strain CDC 3083-94 / BS512).